Here is a 150-residue protein sequence, read N- to C-terminus: Transcriptional repressor NrdR (150 aa).

A zinc finger lies at 3–34; that stretch reads CPFCGQLDSKVVDSRPDKGGAAIRRRRECESC. The ATP-cone domain maps to 49 to 139; that stretch reads PLVLKKDGRR…VYRSFKDVNE (91 aa).

This sequence belongs to the NrdR family. Requires Zn(2+) as cofactor.

Functionally, negatively regulates transcription of bacterial ribonucleotide reductase nrd genes and operons by binding to NrdR-boxes. In Geobacter sulfurreducens (strain ATCC 51573 / DSM 12127 / PCA), this protein is Transcriptional repressor NrdR.